The following is a 458-amino-acid chain: MSLYEHAALPLASSPSILGPISGGRNRGNIQLQSIPIEFQAVVFAGFGNSLYPLTGSDALPKALLPIGNKPMLHYPLYWLEAAGFTSAILICMEEAEAHINAWLRSGYEGHMRIHVEAPTILDDSKSSADALRAVSHLIKNDFVCLSCDSIVGLPPIYGLDKFRLDNPSALAVYSPVLKYEHITSQSKEIDAKQLIGIEEKTSRLLYAKSSADVGSDFTFRMSLLWKHPRVTLNTNLSDAHIFVFKHWVIDLIREKESISSIRGDLIPYLVKCQYQKSFTVRENIQRFLSSPNNIDNYDGGLSSQEIKINALIAKDGIICSRANNLPNYFELNKCIAKLTPEQRLVDVTVSERALVGADCMVNEGTTIKDNSNIKKSIIGKNCVIGKGVVVSNSILMDNIVVEDGVRLESCIVASGAQIGAKSKLRECEIGVDHRVEAGRIARGERLVDMEKIETDMD.

A Phosphoserine modification is found at S291.

Belongs to the eIF-2B gamma/epsilon subunits family. As to quaternary structure, component of the translation initiation factor 2B (eIF2B) complex which is a heterodecamer of two sets of five different subunits: alpha, beta, gamma, delta and epsilon. Subunits alpha, beta and delta comprise a regulatory subcomplex and subunits epsilon and gamma comprise a catalytic subcomplex. Within the complex, the hexameric regulatory complex resides at the center, with the two heterodimeric catalytic subcomplexes bound on opposite sides.

It is found in the cytoplasm. The protein localises to the cytosol. In terms of biological role, acts as a component of the translation initiation factor 2B (eIF2B) complex, which catalyzes the exchange of GDP for GTP on the eukaryotic initiation factor 2 (eIF2) complex gamma subunit. Its guanine nucleotide exchange factor activity is repressed when bound to eIF2 complex phosphorylated on the alpha subunit, thereby limiting the amount of methionyl-initiator methionine tRNA available to the ribosome and consequently global translation is repressed. This Schizosaccharomyces pombe (strain 972 / ATCC 24843) (Fission yeast) protein is Translation initiation factor eIF2B subunit gamma (tif223).